A 366-amino-acid polypeptide reads, in one-letter code: Inhibin alpha chain (366 aa).

Residues 1 to 20 (MVIQPSLLLLLLLTLQDVDS) form the signal peptide. Positions 21-63 (CQGPELVRELVLAKVKALFLDALGPPAMDGEGGGPGIRRLPRR) are excised as a propeptide. Residues 64 to 233 (HALGGFMHRT…APSAGERARR (170 aa)) constitute a propeptide, inhibin alpha N-terminal region. 2 N-linked (GlcNAc...) asparagine glycosylation sites follow: asparagine 147 and asparagine 269. 3 cysteine pairs are disulfide-bonded: cysteine 263-cysteine 328, cysteine 292-cysteine 363, and cysteine 296-cysteine 365.

This sequence belongs to the TGF-beta family. As to quaternary structure, dimeric, linked by one or more disulfide bonds. Activin B is a dimer of alpha and beta-B. Inhibin A is a dimer of alpha and beta-A. Inhibin B is a dimer of alpha and beta-B. Interacts with TGFBR3L; this interaction regulates female fertility. In terms of processing, proteolytic processing yields a number of bioactive forms, consisting either solely of the mature alpha chain, of the most N-terminal propeptide linked through a disulfide bond to the mature alpha chain, or of the entire proprotein. Mainly expressed in ovary and testis. Alpha- and beta-B-subunits are the predominant forms found in testis. Also found in placenta, pituitary, adrenal gland, bone marrow, kidney, spinal cord and brain.

It is found in the secreted. In terms of biological role, inhibins and activins inhibit and activate, respectively, the secretion of follitropin by the pituitary gland. Inhibins/activins are involved in regulating a number of diverse functions such as hypothalamic and pituitary hormone secretion, gonadal hormone secretion, germ cell development and maturation, erythroid differentiation, insulin secretion, nerve cell survival, embryonic axial development or bone growth, depending on their subunit composition. Inhibins appear to oppose the functions of activins. Functionally, inhibin A is a dimer of alpha/INHA and beta-A/INHBA that functions as a feedback regulator in the hypothalamic-pituitary-gonadal (HPG) axis. Inhibits the secretion of FSH from the anterior pituitary gland by acting on pituitary gonadotrope cells. Antagonizes activin A by binding to the proteoglycan, betaglycan, and forming a stable complex with and, thereby, sequestering type II activin receptors while excluding type I receptor. Its function is as follows. Inhibin B is a dimer of alpha and beta-B that plays a crucial role in the regulation of the reproductive system by inhibiting the secretion of follicle-stimulating hormone (FSH) from the anterior pituitary gland. Thereby, maintains reproductive homeostasis in both males and females. Acts as a more potent suppressor of FSH release than inhibin A. Functions as competitive receptor antagonist binding activin type II receptors with high affinity in the presence of the TGF-beta type III coreceptor/TGFBR3L. In Rattus norvegicus (Rat), this protein is Inhibin alpha chain (Inha).